Reading from the N-terminus, the 357-residue chain is N-acetyl-gamma-glutamyl-phosphate reductase (357 aa).

Residue Cys-160 is part of the active site.

It belongs to the NAGSA dehydrogenase family. Type 1 subfamily.

Its subcellular location is the cytoplasm. The enzyme catalyses N-acetyl-L-glutamate 5-semialdehyde + phosphate + NADP(+) = N-acetyl-L-glutamyl 5-phosphate + NADPH + H(+). Its pathway is amino-acid biosynthesis; L-arginine biosynthesis; N(2)-acetyl-L-ornithine from L-glutamate: step 3/4. In terms of biological role, catalyzes the NADPH-dependent reduction of N-acetyl-5-glutamyl phosphate to yield N-acetyl-L-glutamate 5-semialdehyde. This chain is N-acetyl-gamma-glutamyl-phosphate reductase, found in Prochlorococcus marinus (strain MIT 9313).